The primary structure comprises 1379 residues: ABC multidrug transporter MDR2 (1379 aa).

Residues 65–85 (IALIVIGTIAGIGAGIPFPLL) traverse the membrane as a helical segment. Positions 69-367 (VIGTIAGIGA…MAPFMHIFAS (299 aa)) constitute an ABC transmembrane type-1 1 domain. Asn97 is a glycosylation site (N-linked (GlcNAc...) asparagine). A run of 5 helical transmembrane segments spans residues 119–139 (VLQV…HTGC), 193–213 (KVGL…VAFL), 215–235 (VATI…MAFG), 301–321 (IQFG…FWQG), and 336–356 (VSVG…FVLS). The region spanning 403–682 (IELQDVTFNY…DGVYAGMVRL (280 aa)) is the ABC transporter 1 domain. 438–445 (GTSGSGKS) is a binding site for ATP. Residues Asn552 and Asn633 are each glycosylated (N-linked (GlcNAc...) asparagine). The segment at 738–758 (YMPEEADSLPTEPENEKEKPK) is disordered. 4 helical membrane-spanning segments follow: residues 781–801 (LGLI…VIFG), 820–840 (GMLF…AVIV), 881–901 (LLVA…GTTI), and 920–942 (VIAW…SGVL). An ABC transmembrane type-1 2 domain is found at 781–1068 (LGLITSIMIG…MFALVPDISK (288 aa)). A glycan (N-linked (GlcNAc...) asparagine) is linked at Asn989. 2 consecutive transmembrane segments (helical) span residues 1008–1028 (FWLS…YWWG) and 1032–1052 (ILAG…LLFS). In terms of domain architecture, ABC transporter 2 spans 1135–1374 (VQFRNVHFRY…CESYRANVIH (240 aa)). 1170 to 1177 (GPSGSGKS) contacts ATP.

Belongs to the ABC transporter superfamily. ABCB family. Multidrug resistance exporter (TC 3.A.1.201) subfamily.

It is found in the cell membrane. Functionally, pleiotropic ABC efflux transporter that may be involved in the modulation susceptibility to a wide range of unrelated cytotoxic compounds. This Trichophyton interdigitale (strain MR816) protein is ABC multidrug transporter MDR2.